The following is a 159-amino-acid chain: NADH-quinone oxidoreductase subunit B (159 aa).

Residues Cys32, Cys33, Cys97, and Cys126 each contribute to the [4Fe-4S] cluster site.

It belongs to the complex I 20 kDa subunit family. As to quaternary structure, NDH-1 is composed of 14 different subunits. Subunits NuoB, C, D, E, F, and G constitute the peripheral sector of the complex. [4Fe-4S] cluster serves as cofactor.

It is found in the cell inner membrane. It carries out the reaction a quinone + NADH + 5 H(+)(in) = a quinol + NAD(+) + 4 H(+)(out). Functionally, NDH-1 shuttles electrons from NADH, via FMN and iron-sulfur (Fe-S) centers, to quinones in the respiratory chain. The immediate electron acceptor for the enzyme in this species is believed to be ubiquinone. Couples the redox reaction to proton translocation (for every two electrons transferred, four hydrogen ions are translocated across the cytoplasmic membrane), and thus conserves the redox energy in a proton gradient. This is NADH-quinone oxidoreductase subunit B from Helicobacter pylori (strain HPAG1).